The chain runs to 579 residues: MARSWSLLLLPFALALVASVAQAAVVEYTFNVGNLSISQLCQQEMIITAVNGQLPGPTIVATEGDTVVVHMVNESPYNMTIHWHGIFQRGTPWADGPAMVTQCPVRPGGNYTYRFNVTGQEGTLWWHSHFSFLRATVYGALIIKPRGGAKAYPFPVPDEEVVVILGEWWKTNVYDLQQRSLVTGNPAPHADAYTINGKPGDFYNCSAPNQTHKFELKQNKTYMLRIINAALNTPLFFKVANHSFNVVAADACYTKPYKTDVVVISPGQTVDALLVPDAGVAAAVGGRYYMAVIPYNSAVNAADPSFLYSLTNSTAIVEYGGGPATSPPMVPDMPEYNDTATAHRFLSNMTALVPNRVPLAVDTHMFVTVSMGDTFCGPEQTMCMPDDKGTIFASSMNNASFILPNTTSMLEAMYKGSIDGVYTRDFPDTPPIVFDYTADASDDNATLKHTFKSTKVKTLKYNSTVQMVLQNTRLVSKESHPMHLHGFNFFVLAQGFGNYNETTDPAKFNLVDPQERNTVAVPTGGWAVIRFVADNPGVWFMHCHFDAHLEFGLGMVFEVQNGPTQETSLPPPPSDLPQC.

Residues 1 to 23 (MARSWSLLLLPFALALVASVAQA) form the signal peptide. 2 Plastocyanin-like domains span residues 31–148 (NVGN…PRGG) and 159–322 (EEVV…YGGG). Asn-34 and Asn-78 each carry an N-linked (GlcNAc...) asparagine glycan. Cu cation contacts are provided by His-82 and His-84. Asn-110 and Asn-116 each carry an N-linked (GlcNAc...) asparagine glycan. The Cu cation site is built by His-127 and His-129. Asn-204, Asn-209, Asn-219, Asn-241, Asn-312, Asn-337, Asn-348, Asn-398, Asn-405, Asn-444, and Asn-462 each carry an N-linked (GlcNAc...) asparagine glycan. In terms of domain architecture, Plastocyanin-like 3 spans 425 to 563 (DFPDTPPIVF…GMVFEVQNGP (139 aa)). His-480, His-483, and His-485 together coordinate Cu cation. N-linked (GlcNAc...) asparagine glycosylation is present at Asn-500. Positions 542, 543, 544, and 548 each coordinate Cu cation.

This sequence belongs to the multicopper oxidase family. Cu cation serves as cofactor.

Its subcellular location is the secreted. The protein localises to the extracellular space. The protein resides in the apoplast. The enzyme catalyses 4 hydroquinone + O2 = 4 benzosemiquinone + 2 H2O. Its function is as follows. Lignin degradation and detoxification of lignin-derived products. The chain is Laccase-24 (LAC24) from Oryza sativa subsp. japonica (Rice).